Consider the following 899-residue polypeptide: MSAQEDALPATPPASSSIKISDGDKPKEKRTGTRMKLLNDVAAKAAVASKGASVSPRLKPEKRTSIKILNNNNNDEAQTSTKGGDSVPRPKPPAPASRYRTRSSAPASSAVETAKIKTSPSKKKKMDHYVLQAIKSENNKAENTTSVVVVEDEDTIDFILADDEVELGAGAKENGEEFVVSGVDEDDDDDDDDEDEGVVEGGAKRRSGNNELKEMVEHVCGKCYKTFRRVKSLKKHLEFCRYDSGYHLRKADMLKNLEKIEKDAVVMEKKDISFCCSESYDTFHLGHINCPDCPKSFKTQTSYERHIFITHSWSCNDYPCSICNAKLRSGALLKLHEQQHQLRGKPFACKICGKDFMCSYHLKCHQKYSSCSANENDTMSCKVCDRVFYRLDNLCAHLKQHLGTQVVKKPEYMCHVCKNCFYSLSTLNIHIRTHTGEKPFDCDLCDKKFSALVALKKHRRYHTGEKPYTCTVCSQSFAVKEVLNRHMKRHTGERPHKCNECGKSFIQATQLRTHSKTHLRPYACSLCIQKFKTEKQLERHVKDHTRQKRASFACTECTRSFRTSALLKEHLDAGDHSPVKSTRAKRSAKMIERTDCAICDKNFDTTETLRNHIRSVHECDPDDIFGTEPPAKRKAKKTVVAAVAEEQKEQEDDVPARNTSAGSLISSKTDGNGVVVREFLVDEGDGNAQTIDLRKRGLHHLPLEGDKATESTAETDIKAESSKEKPSVSPVVKKEQRKSLAASLAAAIADNLEEPSSDDEFSGEVLTEEDLKLKENIAKLIDMLVDPQTLKKYGWPNSSEESVLCKVIENCGHDLAKGSEAYAELDYGSRMPILQLLFTVVIHNDSIKALLNNFPIDDVIEYVLGDEDQDQDQETDKGKDREADNTDTDTREDAVESEA.

Disordered stretches follow at residues 1-33, 45-127, and 171-206; these read MSAQ…RTGT, AAVA…KKMD, and AKEN…AKRR. Residues 21-31 show a composition bias toward basic and acidic residues; that stretch reads SDGDKPKEKRT. The segment covering 45–55 has biased composition (low complexity); it reads AAVASKGASVS. Composition is skewed to polar residues over residues 67 to 83 and 102 to 111; these read KILN…STKG and RSSAPASSAV. Over residues 183-198 the composition is skewed to acidic residues; it reads VDEDDDDDDDDEDEGV. A C2H2-type 1; atypical zinc finger spans residues 218-240; sequence HVCGKCYKTFRRVKSLKKHLEFC. The C2H2-type 2 zinc finger occupies 288–311; sequence INCPDCPKSFKTQTSYERHIFITH. The C2H2-type 3; atypical zinc-finger motif lies at 318 to 340; the sequence is YPCSICNAKLRSGALLKLHEQQH. C2H2-type zinc fingers lie at residues 347–365, 379–401, 412–434, 440–462, 468–490, 496–518, 522–544, 552–576, and 594–617; these read FACK…LKCH, MSCK…LKQH, YMCH…IRTH, FDCD…RRYH, YTCT…MKRH, HKCN…SKTH, YACS…VKDH, FACT…AGDH, and TDCA…RSVH. 3 disordered regions span residues 646–665, 702–734, and 865–899; these read EQKE…GSLI, PLEG…VVKK, and GDED…ESEA. A compositionally biased stretch (basic and acidic residues) spans 874-899; the sequence is ETDKGKDREADNTDTDTREDAVESEA.

Its subcellular location is the nucleus. In terms of biological role, component of the gypsy chromatin insulator complex which is required for the function of the gypsy chromatin insulator and other endogenous chromatin insulators. Chromatin insulators are regulatory elements which establish independent domains of transcriptional activity within eukaryotic genomes. Insulators have two defining properties; they can block the communication between an enhancer and a promoter when placed between them and can also buffer transgenes from position effect variegation (PEV). Insulators are proposed to structure the chromatin fiber into independent domains of differing transcriptional potential by promoting the formation of distinct chromatin loops. This chromatin looping may involve the formation of insulator bodies, where homotypic interactions between individual subunits of the insulator complex could promote the clustering of widely spaced insulators at the nuclear periphery. Within the gypsy insulator complex, this protein binds specifically to a region of the gypsy element located 3' of the 5' long terminal repeat (LTR), and may also mediate interaction with other endogenous insulators at sites distinct from those recognized by Cp190. Cooperates with pita and cliff to recruit Cp190 and regulate insulator function at the front-ultraabdominal (Fub) boundary. This is Protein suppressor of hairy wing (su(Hw)) from Drosophila virilis (Fruit fly).